Reading from the N-terminus, the 247-residue chain is ATP synthase subunit a, chloroplastic (247 aa).

Helical transmembrane passes span 38–58 (QVLI…TIAV), 95–115 (VPFI…GALL), 134–154 (INTT…AGLT), 199–219 (LVVV…VMFL), and 220–240 (GLFT…AYIG).

This sequence belongs to the ATPase A chain family. In terms of assembly, F-type ATPases have 2 components, CF(1) - the catalytic core - and CF(0) - the membrane proton channel. CF(1) has five subunits: alpha(3), beta(3), gamma(1), delta(1), epsilon(1). CF(0) has four main subunits: a, b, b' and c.

The protein localises to the plastid. It localises to the chloroplast thylakoid membrane. In terms of biological role, key component of the proton channel; it plays a direct role in the translocation of protons across the membrane. The sequence is that of ATP synthase subunit a, chloroplastic from Buxus microphylla (Littleleaf boxwood).